The primary structure comprises 335 residues: MDRIVEIEKYSFDETYETSLRPSNFDGYIGQESIKKNLNIFIAAAKKRNECLDHILFSGPAGLGKTTLANIISYEMGANIKTTAAPMIEKSGDLAAILTNLSEGDILFIDEIHRLSPAIEEVLYPAMEDYRLDIIIGSGPAAQTIKIDLPKFTLIGATTRAGMLSNPLRDRFGMQFRLEFYKDSELALILQKAALKLNKTCEEKAALEIAKRSRSTPRIALRLLKRVRDFADVNDEEIITEKRANEALNSLGVNELGFDAMDLRYLELLTAAKQKPIGLASIAAALSEDENTIEDVIEPYLLANGYIERTAKGRIASAKSYSALKLNYEKTLFEE.

The large ATPase domain (RuvB-L) stretch occupies residues 1–181 (MDRIVEIEKY…FGMQFRLEFY (181 aa)). Residues Leu20, Arg21, Gly62, Lys65, Thr66, Thr67, 128–130 (EDY), Arg171, Tyr181, and Arg218 each bind ATP. Thr66 lines the Mg(2+) pocket. A small ATPAse domain (RuvB-S) region spans residues 182–252 (KDSELALILQ…RANEALNSLG (71 aa)). The interval 255–335 (ELGFDAMDLR…LNYEKTLFEE (81 aa)) is head domain (RuvB-H). DNA is bound by residues Arg309 and Arg314.

It belongs to the RuvB family. As to quaternary structure, homohexamer. Forms an RuvA(8)-RuvB(12)-Holliday junction (HJ) complex. HJ DNA is sandwiched between 2 RuvA tetramers; dsDNA enters through RuvA and exits via RuvB. An RuvB hexamer assembles on each DNA strand where it exits the tetramer. Each RuvB hexamer is contacted by two RuvA subunits (via domain III) on 2 adjacent RuvB subunits; this complex drives branch migration. In the full resolvosome a probable DNA-RuvA(4)-RuvB(12)-RuvC(2) complex forms which resolves the HJ.

It localises to the cytoplasm. It catalyses the reaction ATP + H2O = ADP + phosphate + H(+). In terms of biological role, the RuvA-RuvB-RuvC complex processes Holliday junction (HJ) DNA during genetic recombination and DNA repair, while the RuvA-RuvB complex plays an important role in the rescue of blocked DNA replication forks via replication fork reversal (RFR). RuvA specifically binds to HJ cruciform DNA, conferring on it an open structure. The RuvB hexamer acts as an ATP-dependent pump, pulling dsDNA into and through the RuvAB complex. RuvB forms 2 homohexamers on either side of HJ DNA bound by 1 or 2 RuvA tetramers; 4 subunits per hexamer contact DNA at a time. Coordinated motions by a converter formed by DNA-disengaged RuvB subunits stimulates ATP hydrolysis and nucleotide exchange. Immobilization of the converter enables RuvB to convert the ATP-contained energy into a lever motion, pulling 2 nucleotides of DNA out of the RuvA tetramer per ATP hydrolyzed, thus driving DNA branch migration. The RuvB motors rotate together with the DNA substrate, which together with the progressing nucleotide cycle form the mechanistic basis for DNA recombination by continuous HJ branch migration. Branch migration allows RuvC to scan DNA until it finds its consensus sequence, where it cleaves and resolves cruciform DNA. This is Holliday junction branch migration complex subunit RuvB from Campylobacter jejuni (strain RM1221).